The sequence spans 345 residues: Protein RecA (345 aa).

81–88 (GPESSGKT) contributes to the ATP binding site.

Belongs to the RecA family.

It is found in the cytoplasm. Can catalyze the hydrolysis of ATP in the presence of single-stranded DNA, the ATP-dependent uptake of single-stranded DNA by duplex DNA, and the ATP-dependent hybridization of homologous single-stranded DNAs. It interacts with LexA causing its activation and leading to its autocatalytic cleavage. The polypeptide is Protein RecA (Mycoplasma mycoides).